Reading from the N-terminus, the 83-residue chain is Small ribosomal subunit protein uS17 (83 aa).

It belongs to the universal ribosomal protein uS17 family. In terms of assembly, part of the 30S ribosomal subunit.

One of the primary rRNA binding proteins, it binds specifically to the 5'-end of 16S ribosomal RNA. This Aliarcobacter butzleri (strain RM4018) (Arcobacter butzleri) protein is Small ribosomal subunit protein uS17.